A 1331-amino-acid chain; its full sequence is DNA replication ATP-dependent helicase/nuclease JHS1 (1331 aa).

The disordered stretch occupies residues Met1–Ser98. Residues Pro2–Lys8 carry the Nuclear localization signal motif. Polar residues predominate over residues Ala11–Ile31. The span at Gln40 to Thr52 shows a compositional bias: low complexity. Over residues Asp57–Asn81 the composition is skewed to polar residues. Residues Glu82–Asp91 show a composition bias toward basic and acidic residues. The interval Glu362–Ile811 is nuclease activity. The [4Fe-4S] cluster site is built by Cys422, Cys666, Cys669, and Cys675. The interval Leu812–Pro1331 is helicase activity. Residues Asn924–Ser1271 enclose the UvrD-like helicase ATP-binding domain. Gly945 to Thr952 is a binding site for ATP.

Belongs to the DNA2/NAM7 helicase family. The cofactor is [4Fe-4S] cluster. As to expression, strongly expressed in meristems, including both root and shoot apical meristems (RAM and SAM). Also present in the vasculature and in young floral tissues.

The protein localises to the nucleus. Its subcellular location is the chromosome. It carries out the reaction ATP + H2O = ADP + phosphate + H(+). Functionally, essential protein required during embryogenesis. Key enzyme involved in DNA replication and damage repair, shoot apical meristem (SAM) maintenance, and development. Involved in Okazaki fragments processing. Possesses different enzymatic activities, such as single-stranded DNA (ssDNA)-dependent ATPase, 5'-3' helicase and endonuclease activities. While the ATPase and endonuclease activities are well-defined and play a key role in Okazaki fragments processing and DSB repair, the 5'-3' DNA helicase activity is atypical: it cannot load onto its tracking strand internally and has an absolute free 5'-end requirement. The sequence is that of DNA replication ATP-dependent helicase/nuclease JHS1 from Arabidopsis thaliana (Mouse-ear cress).